Here is a 210-residue protein sequence, read N- to C-terminus: Oxygen-insensitive NADPH nitroreductase (210 aa).

150-155 (GVSLMG) is a binding site for NADP(+).

Belongs to the nitroreductase family.

Its function is as follows. Reduction of a variety of nitroaromatic compounds using NADPH as source of reducing equivalents; two electrons are transferred. In Helicobacter acinonychis (strain Sheeba), this protein is Oxygen-insensitive NADPH nitroreductase (rdxA).